Consider the following 409-residue polypeptide: uncharacterized protein (409 aa).

A run of 10 helical transmembrane segments spans residues 53–73 (IITL…YVHC), 83–103 (WCYF…NVDG), 115–135 (LGEL…AIVM), 141–161 (IGPY…YLAH), 183–203 (VLFM…WTYG), 205–225 (STTV…VTCL), 243–263 (CLLQ…WASV), 265–285 (NLIT…FGYI), 299–319 (CSLF…SILA), and 329–349 (TVAL…FSYF). The segment covering 388-401 (EEGSSSIGNSTDDI) has biased composition (polar residues). Residues 388–409 (EEGSSSIGNSTDDINPSEIEEI) are disordered.

The protein belongs to the CDP-alcohol phosphatidyltransferase class-I family.

It is found in the membrane. This is an uncharacterized protein from Dictyostelium discoideum (Social amoeba).